The sequence spans 56 residues: Large ribosomal subunit protein bL32 (56 aa).

Residues 1–16 (MAVQKSKKSRSRRDMR) are compositionally biased toward basic residues. Positions 1–56 (MAVQKSKKSRSRRDMRRSHDAIDGPTLSVDSTTGETHRRHHVTADGYYKGRKVVNK) are disordered.

It belongs to the bacterial ribosomal protein bL32 family.

This chain is Large ribosomal subunit protein bL32, found in Idiomarina loihiensis (strain ATCC BAA-735 / DSM 15497 / L2-TR).